The sequence spans 337 residues: tRNA N6-adenosine threonylcarbamoyltransferase (337 aa).

Positions 111 and 115 each coordinate Fe cation. Residues 134 to 138, D167, G180, and N272 contribute to the substrate site; that span reads LVSGG. D300 provides a ligand contact to Fe cation.

Belongs to the KAE1 / TsaD family. The cofactor is Fe(2+).

The protein localises to the cytoplasm. The catalysed reaction is L-threonylcarbamoyladenylate + adenosine(37) in tRNA = N(6)-L-threonylcarbamoyladenosine(37) in tRNA + AMP + H(+). Its function is as follows. Required for the formation of a threonylcarbamoyl group on adenosine at position 37 (t(6)A37) in tRNAs that read codons beginning with adenine. Is involved in the transfer of the threonylcarbamoyl moiety of threonylcarbamoyl-AMP (TC-AMP) to the N6 group of A37, together with TsaE and TsaB. TsaD likely plays a direct catalytic role in this reaction. The sequence is that of tRNA N6-adenosine threonylcarbamoyltransferase from Pectobacterium atrosepticum (strain SCRI 1043 / ATCC BAA-672) (Erwinia carotovora subsp. atroseptica).